The sequence spans 446 residues: Probable carboxylesterase 16 (446 aa).

Residues 84 to 131 (PEPDSLRHKDNYNHQPRSDRRHSYGPNHNSPAPAERNESRRNSYGCNN) form a disordered region. The span at 87–105 (DSLRHKDNYNHQPRSDRRH) shows a compositional bias: basic and acidic residues. The Involved in the stabilization of the negatively charged intermediate by the formation of the oxyanion hole signature appears at 158-160 (HGG). Residues Ser-274, Asp-378, and His-408 contribute to the active site.

This sequence belongs to the 'GDXG' lipolytic enzyme family. In terms of tissue distribution, expressed in roots, leaves, stems, flowers and siliques.

The catalysed reaction is a carboxylic ester + H2O = an alcohol + a carboxylate + H(+). Carboxylesterase acting on esters with varying acyl chain length. The sequence is that of Probable carboxylesterase 16 (CXE16) from Arabidopsis thaliana (Mouse-ear cress).